Here is a 340-residue protein sequence, read N- to C-terminus: L-lysine 2,3-aminomutase (340 aa).

A Radical SAM core domain is found at 106-321; the sequence is RKYNNRILLL…SMISGFLVPK (216 aa). [4Fe-4S] cluster-binding residues include Cys120, Cys124, and Cys127. An N6-(pyridoxal phosphate)lysine modification is found at Lys332.

The protein belongs to the radical SAM superfamily. KamA family. [4Fe-4S] cluster is required as a cofactor. Pyridoxal 5'-phosphate serves as cofactor.

It carries out the reaction L-lysine = D-beta-lysine. Functionally, with EpmA is involved in the beta-lysylation step of the post-translational modification of translation elongation factor P (EF-P) on 'Lys-34'. EpmB appears to act before EpmA. Displays lysine 2,3-aminomutase activity, producing (R)-beta-lysine from (S)-alpha-lysine (L-lysine). The chain is L-lysine 2,3-aminomutase (epmB) from Buchnera aphidicola subsp. Baizongia pistaciae (strain Bp).